The following is a 427-amino-acid chain: MLGVALLSGAVHAAVQPLDRVVAIVDNDVVMQSQLDQRVHEVQQTIAKRGGGVPPTSALEQQVLERLIVENLQLQIGERSGIRITDEELNQAIGTIAQRNGMSLDQFRAALARDGLSFDDAREQVKREMIISRVRQRRVAERIQVSEQEVKNFLASDLGKMQMSEEYRLANILIPTPEAANSDDIQKAARKVGDVYQQLRQGADFGQMAIANSASENALEGGEMGWRKAGQLPPDFAKMLSSMPVGEITQPIRIPNGFIILKLEEKRGGSENVLRDEVHVRHILIKPSEIRSEAATEQLAERLYDRIKNGEDFGELAKSFSEDPGSALNGGDLNWVDPNSLVPEFREQMANAQQGVVTKPFKTQYGWHVLEVLGRRATDSTEQAREQQALSVLRNRKYDEELQTWLRQIRDEAYVEIKLPGADQAAQ.

Positions 1–13 are cleaved as a signal peptide; that stretch reads MLGVALLSGAVHA. 2 consecutive PpiC domains span residues 164–265 and 275–374; these read SEEY…KLEE and RDEV…EVLG.

The protein localises to the periplasm. It catalyses the reaction [protein]-peptidylproline (omega=180) = [protein]-peptidylproline (omega=0). In terms of biological role, chaperone involved in the correct folding and assembly of outer membrane proteins. Recognizes specific patterns of aromatic residues and the orientation of their side chains, which are found more frequently in integral outer membrane proteins. May act in both early periplasmic and late outer membrane-associated steps of protein maturation. The protein is Chaperone SurA of Pseudomonas putida (strain ATCC 47054 / DSM 6125 / CFBP 8728 / NCIMB 11950 / KT2440).